The chain runs to 165 residues: MRIDPSTLDLKEKVVFINRVAKVVKGGRNFRFTALVVVGDENGHVGVGTGKSAEIPEAIRKGIEDAKKNLVEVAIVGTTVPHEIYGEFGTGRVLIMPASEGTGVIAGGPVRAVLELAGLNDVRAKSLGSNNPRNMVNATINGLSRLRTVEQIAALRGKTVEEILG.

In terms of domain architecture, S5 DRBM spans 10–73 (LKEKVVFINR…EDAKKNLVEV (64 aa)).

The protein belongs to the universal ribosomal protein uS5 family. Part of the 30S ribosomal subunit. Contacts proteins S4 and S8.

With S4 and S12 plays an important role in translational accuracy. Its function is as follows. Located at the back of the 30S subunit body where it stabilizes the conformation of the head with respect to the body. This is Small ribosomal subunit protein uS5 from Clostridium acetobutylicum (strain ATCC 824 / DSM 792 / JCM 1419 / IAM 19013 / LMG 5710 / NBRC 13948 / NRRL B-527 / VKM B-1787 / 2291 / W).